The primary structure comprises 157 residues: Phosphopantetheine adenylyltransferase (157 aa).

S8 contacts substrate. Residues 8-9 (SF) and H16 contribute to the ATP site. Residues K40, T72, and R86 each contribute to the substrate site. Residues 87–89 (GLR), E97, and 122–128 (FSFLSSS) each bind ATP.

This sequence belongs to the bacterial CoaD family. In terms of assembly, homohexamer. Mg(2+) is required as a cofactor.

The protein localises to the cytoplasm. It catalyses the reaction (R)-4'-phosphopantetheine + ATP + H(+) = 3'-dephospho-CoA + diphosphate. It functions in the pathway cofactor biosynthesis; coenzyme A biosynthesis; CoA from (R)-pantothenate: step 4/5. Reversibly transfers an adenylyl group from ATP to 4'-phosphopantetheine, yielding dephospho-CoA (dPCoA) and pyrophosphate. The protein is Phosphopantetheine adenylyltransferase of Prochlorococcus marinus (strain MIT 9211).